The primary structure comprises 141 residues: Galactose-6-phosphate isomerase subunit LacA (141 aa).

The protein belongs to the LacAB/RpiB family. Heteromultimeric protein consisting of LacA and LacB.

It carries out the reaction aldehydo-D-galactose 6-phosphate = keto-D-tagatose 6-phosphate. It participates in carbohydrate metabolism; D-galactose 6-phosphate degradation; D-tagatose 6-phosphate from D-galactose 6-phosphate: step 1/1. The protein is Galactose-6-phosphate isomerase subunit LacA of Streptococcus pneumoniae (strain 70585).